Here is a 190-residue protein sequence, read N- to C-terminus: Ribosome hibernation promotion factor (190 aa).

It belongs to the HPF/YfiA ribosome-associated protein family. Long HPF subfamily. As to quaternary structure, interacts with 100S ribosomes.

The protein resides in the cytoplasm. Functionally, required for dimerization of active 70S ribosomes into 100S ribosomes in stationary phase; 100S ribosomes are translationally inactive and sometimes present during exponential growth. In Staphylococcus aureus (strain COL), this protein is Ribosome hibernation promotion factor.